Reading from the N-terminus, the 593-residue chain is Serine/threonine-protein kinase SSN3 (593 aa).

The 400-residue stretch at 90-489 (YEIIGYIAAG…AIDALDHVYF (400 aa)) folds into the Protein kinase domain. 96 to 104 (IAAGTYGKV) contacts ATP. Positions 161 to 199 (KPSHKRFTPPNNSNSTQIRSNSGSETNVRINSSSITNNS) are disordered. Residues 169–185 (PPNNSNSTQIRSNSGSE) show a composition bias toward polar residues. A compositionally biased stretch (low complexity) spans 186–199 (TNVRINSSSITNNS). Residue lysine 211 coordinates ATP. Aspartate 312 (proton acceptor) is an active-site residue. 2 disordered regions span residues 517 to 551 (DNDI…NMNG) and 569 to 593 (AAVS…KKRK). A compositionally biased stretch (polar residues) spans 518-536 (NDITNVGNDNNQANHSQKQ). Residues 540 to 551 (GNNNNKNGNMNG) are compositionally biased toward low complexity. The segment covering 573–585 (GNGNNPTSNTATG) has biased composition (polar residues).

The protein belongs to the protein kinase superfamily. CMGC Ser/Thr protein kinase family. CDC2/CDKX subfamily. Component of the SRB8-11 complex, a regulatory module of the Mediator complex. Mg(2+) serves as cofactor.

The protein resides in the nucleus. It catalyses the reaction L-seryl-[protein] + ATP = O-phospho-L-seryl-[protein] + ADP + H(+). The enzyme catalyses L-threonyl-[protein] + ATP = O-phospho-L-threonyl-[protein] + ADP + H(+). It carries out the reaction [DNA-directed RNA polymerase] + ATP = phospho-[DNA-directed RNA polymerase] + ADP + H(+). In terms of biological role, component of the SRB8-11 complex. The SRB8-11 complex is a regulatory module of the Mediator complex which is itself involved in regulation of basal and activated RNA polymerase II-dependent transcription. The SRB8-11 complex may be involved in the transcriptional repression of a subset of genes regulated by Mediator. It may inhibit the association of the Mediator complex with RNA polymerase II to form the holoenzyme complex. The SRB8-11 complex phosphorylates the C-terminal domain (CTD) of the largest subunit of RNA polymerase II. This Kluyveromyces lactis (strain ATCC 8585 / CBS 2359 / DSM 70799 / NBRC 1267 / NRRL Y-1140 / WM37) (Yeast) protein is Serine/threonine-protein kinase SSN3 (SSN3).